A 104-amino-acid chain; its full sequence is Large ribosomal subunit protein uL24 (104 aa).

This sequence belongs to the universal ribosomal protein uL24 family. Part of the 50S ribosomal subunit.

Its function is as follows. One of two assembly initiator proteins, it binds directly to the 5'-end of the 23S rRNA, where it nucleates assembly of the 50S subunit. Functionally, one of the proteins that surrounds the polypeptide exit tunnel on the outside of the subunit. This Afipia carboxidovorans (strain ATCC 49405 / DSM 1227 / KCTC 32145 / OM5) (Oligotropha carboxidovorans) protein is Large ribosomal subunit protein uL24.